The following is a 590-amino-acid chain: Polypeptide N-acetylgalactosaminyltransferase 8 (590 aa).

Topologically, residues 1-11 are cytoplasmic; that stretch reads MCLDIWRHKKK. Residues 12–31 traverse the membrane as a helical; Signal-anchor for type II membrane protein segment; it reads VLPLLLLMAIGSIIYYLYTL. Residues 32–590 are Lumenal-facing; that stretch reads KLEGERDESA…QHFWDNVKTQ (559 aa). N77 is a glycosylation site (N-linked (GlcNAc...) asparagine). Intrachain disulfides connect C117/C345, C336/C419, C459/C475, C502/C517, and C546/C561. The tract at residues 127-236 is catalytic subdomain A; the sequence is LPSVSVVITY…KGWLEPLIAP (110 aa). D168 is a substrate binding site. Residue D220 coordinates Mn(2+). S221 contributes to the substrate binding site. H222 lines the Mn(2+) pocket. N-linked (GlcNAc...) asparagine glycosylation occurs at N241. The catalytic subdomain B stretch occupies residues 291–353; that stretch reads PHKNPIMNGG…PCSRVGHLFR (63 aa). W322 is a substrate binding site. Mn(2+) is bound at residue H350. Residue R353 participates in substrate binding. In terms of domain architecture, Ricin B-type lectin spans 446 to 573; sequence ASGVLQSISS…KNHKQQWKFG (128 aa).

Belongs to the glycosyltransferase 2 family. GalNAc-T subfamily. The cofactor is Mn(2+). In terms of tissue distribution, expressed in developing oocytes and egg chambers. During embryonic stages 9-11, expressed in the primordium of the foregut, midgut and hindgut. During embryonic stages 12-13, expressed in the posterior midgut and hindgut. During embryonic stages 14-15, expression continues in the hindgut. No expression detected during embryonic stages 16-17 or in third instar larvae imaginal disks.

It localises to the golgi apparatus membrane. The catalysed reaction is L-seryl-[protein] + UDP-N-acetyl-alpha-D-galactosamine = a 3-O-[N-acetyl-alpha-D-galactosaminyl]-L-seryl-[protein] + UDP + H(+). It catalyses the reaction L-threonyl-[protein] + UDP-N-acetyl-alpha-D-galactosamine = a 3-O-[N-acetyl-alpha-D-galactosaminyl]-L-threonyl-[protein] + UDP + H(+). It participates in protein modification; protein glycosylation. Catalyzes the initial reaction in O-linked oligosaccharide biosynthesis, the transfer of an N-acetyl-D-galactosamine residue to a serine or threonine residue on the protein receptor. It can both act as a peptide transferase that transfers GalNAc onto unmodified peptide substrates, and as a glycopeptide transferase that requires the prior addition of a GalNAc on a peptide before adding additional GalNAc moieties. Prefers both EA2 and the diglycosylated Muc5AC-3/13 as substrates, albeit at very low levels fro Muc5AC-3/13. The polypeptide is Polypeptide N-acetylgalactosaminyltransferase 8 (Drosophila melanogaster (Fruit fly)).